Here is a 304-residue protein sequence, read N- to C-terminus: Haloalkane dehalogenase (304 aa).

In terms of domain architecture, AB hydrolase-1 spans 42–154 (PIVFLHGNPT…DSVDLSPEFV (113 aa)). Aspartate 114 serves as the catalytic Nucleophile. The active-site Proton donor is the glutamate 138. Histidine 280 functions as the Proton acceptor in the catalytic mechanism.

The protein belongs to the haloalkane dehalogenase family. Type 2 subfamily. As to quaternary structure, monomer.

The enzyme catalyses 1-haloalkane + H2O = a halide anion + a primary alcohol + H(+). Catalyzes hydrolytic cleavage of carbon-halogen bonds in halogenated aliphatic compounds, leading to the formation of the corresponding primary alcohols, halide ions and protons. In Agrobacterium fabrum (strain C58 / ATCC 33970) (Agrobacterium tumefaciens (strain C58)), this protein is Haloalkane dehalogenase.